The chain runs to 328 residues: Pyruvate dehydrogenase E1 component subunit beta (328 aa).

Position 60 (Glu60) interacts with thiamine diphosphate. K(+) contacts are provided by Ile113, Ile162, and Asn166.

Heterodimer of an alpha and a beta chain. Requires thiamine diphosphate as cofactor.

The protein localises to the plastid. Its subcellular location is the chloroplast. The catalysed reaction is N(6)-[(R)-lipoyl]-L-lysyl-[protein] + pyruvate + H(+) = N(6)-[(R)-S(8)-acetyldihydrolipoyl]-L-lysyl-[protein] + CO2. In terms of biological role, the pyruvate dehydrogenase complex catalyzes the overall conversion of pyruvate to acetyl-CoA and CO(2). It contains multiple copies of three enzymatic components: pyruvate dehydrogenase (E1), dihydrolipoamide acetyltransferase (E2) and lipoamide dehydrogenase (E3). The protein is Pyruvate dehydrogenase E1 component subunit beta (pdhB) of Staurastrum punctulatum (Green alga).